Consider the following 167-residue polypeptide: Minor fimbrial protein PrsF (167 aa).

Positions 1-18 (MIRLSLFISLLLTSVAVL) are cleaved as a signal peptide.

It localises to the secreted. Its subcellular location is the fimbrium. Fimbriae (also called pili), polar filaments radiating from the surface of the bacterium to a length of 0.5-1.5 micrometers and numbering 100-300 per cell, enable bacteria to colonize the epithelium of specific host organs. This chain is Minor fimbrial protein PrsF (prsF), found in Escherichia coli.